The sequence spans 133 residues: Ribonuclease P protein component (133 aa).

The protein belongs to the RnpA family. In terms of assembly, consists of a catalytic RNA component (M1 or rnpB) and a protein subunit.

It catalyses the reaction Endonucleolytic cleavage of RNA, removing 5'-extranucleotides from tRNA precursor.. Its function is as follows. RNaseP catalyzes the removal of the 5'-leader sequence from pre-tRNA to produce the mature 5'-terminus. It can also cleave other RNA substrates such as 4.5S RNA. The protein component plays an auxiliary but essential role in vivo by binding to the 5'-leader sequence and broadening the substrate specificity of the ribozyme. The chain is Ribonuclease P protein component from Synechococcus sp. (strain JA-2-3B'a(2-13)) (Cyanobacteria bacterium Yellowstone B-Prime).